Here is a 43-residue protein sequence, read N- to C-terminus: uncharacterized protein (43 aa).

This is an uncharacterized protein from Sinorhizobium fredii (strain NBRC 101917 / NGR234).